The primary structure comprises 1165 residues: Transient receptor potential cation channel subfamily M member 5 (1165 aa).

Residues 1–715 (MVEKSSERFD…LRRWNRFWSA (715 aa)) lie on the Cytoplasmic side of the membrane. Position 121 is a phosphoserine (Ser-121). Residues Glu-212, Cys-324, Asp-333, Asp-336, and Glu-337 each contribute to the Ca(2+) site. Residues 716–740 (PVTVFMGNVIMYFAFLILFSYVLLL) traverse the membrane as a helical segment. The Extracellular portion of the chain corresponds to 741–751 (DFRPPPPYGPS). Residues 752–771 (AAEIILYFWVFTLVLEEIRQ) form a helical membrane-spanning segment. Glu-768 and Gln-771 together coordinate Ca(2+). At 772 to 792 (SFFTDEDMSILKKMKLYVEDN) the chain is on the cytoplasmic side. Residues 793-811 (WNKCDMVAISLFVVGLSCR) form a helical membrane-spanning segment. Ca(2+) contacts are provided by Asn-794 and Asp-797. Residues 812-818 (MAMSTYE) are Extracellular-facing. A helical membrane pass occupies residues 819–841 (AGRTVLALDFMVFTLRLIHIFAI). Residues 842–850 (HKQLGPKII) lie on the Cytoplasmic side of the membrane. Residues 851 to 880 (IVERMIKDVFFFLFFLSVWLIAYGVTTQAL) traverse the membrane as a helical segment. The Extracellular portion of the chain corresponds to 881–889 (LHPNDPRID). The pore-forming intramembrane region spans 890 to 930 (WVFRRALYRPYLHIFGQIPLEEIDAAKMPDDNCTTDVQEII). The short motif at 904 to 906 (FGQ) is the Selectivity filter element. The Extracellular portion of the chain corresponds to 931 to 942 (LGTLPPCPNIYA). Residues 943–977 (NWLVILLLVIYLLVTNVLLLNLLIAMFSYTFQVVQ) traverse the membrane as a helical segment. The Cytoplasmic segment spans residues 978 to 1165 (ENADIFWKFQ…TDKKLPFIDH (188 aa)). Glu-994 contacts Ca(2+). Residues 1122–1165 (RDAPKAPRSIAGSSRDQQPQGAKRQQPAGHPAYGTDKKLPFIDH) are disordered. Polar residues predominate over residues 1132 to 1141 (AGSSRDQQPQ). Over residues 1156–1165 (TDKKLPFIDH) the composition is skewed to basic and acidic residues.

The protein belongs to the transient receptor (TC 1.A.4) family. LTrpC subfamily. TRPM5 sub-subfamily. Homotetramer.

The protein resides in the cell membrane. The enzyme catalyses Na(+)(in) = Na(+)(out). The catalysed reaction is K(+)(in) = K(+)(out). Its activity is regulated as follows. Ca(2+)-activated cation channel. Displays voltage dependence modulation. Regulated by PI(4,5)P2 levels. PI(4,5)P 2 reverses the Ca(2+) -induced desensitization of channels. Is highly temperature-sensitive. Functionally, monovalent cation-selective ion channel activated by intracellular Ca(2+) in a voltage- and temperature-dependent manner. Mediates the transport of Na(+), K(+) and Cs(+) ions equally well. Activated directly by increase in intracellular Ca(2+), but is impermeable to it. The activation mechanism of TRPM5 involves a multistep process. TRPM5 activation involves ligand binding (i.e., tastant molecule, glucose stimulation) to Gq/G-protein coupled receptors (GPCR) and leads to the breakdown of phosphatidylinositol bisphosphate (PIP2) into diacylglycerol (DAG) and inositol trisphosphate (IP3), IP3 binds to its receptors in the endoplasmic reticulum and cause Ca(2+) release. Simultaneously with the intracellular Ca(2+) release, DAG activates the protein kinase C (PKC), which phosphorylates the TRPM5 channel. This phosphorylation combined with the bound Ca(2+), leads to a robust inward current allowing the entry of sodium ions (Na+) into the cell. This ion influx depolarizes the cell membrane, generating action potentials that propagate TRPM5 signals. This chain is Transient receptor potential cation channel subfamily M member 5, found in Danio rerio (Zebrafish).